The sequence spans 221 residues: GDP-perosamine N-acetyltransferase (221 aa).

The Proton acceptor role is filled by His-139.

Belongs to the transferase hexapeptide repeat family. In terms of assembly, homotrimer.

The catalysed reaction is GDP-alpha-D-perosamine + acetyl-CoA = GDP-N-acetyl-alpha-D-perosamine + CoA + H(+). It participates in bacterial outer membrane biogenesis; LPS O-antigen biosynthesis. In terms of biological role, catalyzes the transfer of an acetyl residue from acetyl-CoA onto GDP-perosamine to form GDP-N-acetyl-perosamine. The chain is GDP-perosamine N-acetyltransferase from Escherichia coli O157:H7.